The following is a 1035-amino-acid chain: Cell-division control histidine kinase PdhS (1035 aa).

The important for polar localization stretch occupies residues 1-613; sequence MSGSYPFIDI…HADGSEEPVD (613 aa). The disordered stretch occupies residues 500–533; the sequence is QGLANTRAESETPVSETSSIEPVEPTPPVKTRSE. The interaction with DivK stretch occupies residues 614–1035; it reads THLNAIAWRG…VFPPTRVLAD (422 aa). The PAS domain occupies 659–730; sequence HVEELKTILD…YLHGLSGNGV (72 aa). Positions 802–1031 constitute a Histidine kinase domain; the sequence is RISHEIRTPL…VVEIVFPPTR (230 aa). His-805 carries the phosphohistidine; by autocatalysis modification.

In terms of assembly, interacts with DivK.

Its subcellular location is the cytoplasm. It carries out the reaction ATP + protein L-histidine = ADP + protein N-phospho-L-histidine.. Functionally, functions as a polar differentiation marker. Essential protein that, by localizing in the old pole of dividing cells, controls cell division and maturation, probably through control of DivK phosphorylation status and cellular distribution, which in turn regulates CtrA, a transcriptional regulator of the minB operon. The asymmetrical localization of this protein is probably required for cells to enter a new division cycle. In Brucella suis (strain ATCC 23445 / NCTC 10510), this protein is Cell-division control histidine kinase PdhS (pdhS).